A 741-amino-acid chain; its full sequence is NAD(P)H-quinone oxidoreductase subunit 5, chloroplastic (741 aa).

The next 16 helical transmembrane spans lie at 9–29, 40–60, 89–109, 125–145, 147–167, 185–205, 219–239, 258–278, 283–303, 327–347, 354–374, 396–416, 425–445, 549–569, 605–625, and 721–741; these read WIIP…LLLF, WAFQ…NLSI, IDPL…MVLI, FAYM…SNLI, IYIF…FWFT, GDFG…SFEF, NEVN…GAIA, TPIS…FLVA, LFIV…ITVF, LGYM…FHLI, ALLF…VGYC, NSFL…CFWS, WLYS…TAFY, LFPI…GIPF, FFSV…YKPV, and YLFF…FFNL.

This sequence belongs to the complex I subunit 5 family. NDH is composed of at least 16 different subunits, 5 of which are encoded in the nucleus.

The protein localises to the plastid. The protein resides in the chloroplast thylakoid membrane. The catalysed reaction is a plastoquinone + NADH + (n+1) H(+)(in) = a plastoquinol + NAD(+) + n H(+)(out). It catalyses the reaction a plastoquinone + NADPH + (n+1) H(+)(in) = a plastoquinol + NADP(+) + n H(+)(out). In terms of biological role, NDH shuttles electrons from NAD(P)H:plastoquinone, via FMN and iron-sulfur (Fe-S) centers, to quinones in the photosynthetic chain and possibly in a chloroplast respiratory chain. The immediate electron acceptor for the enzyme in this species is believed to be plastoquinone. Couples the redox reaction to proton translocation, and thus conserves the redox energy in a proton gradient. The polypeptide is NAD(P)H-quinone oxidoreductase subunit 5, chloroplastic (ndhF) (Cichorium intybus (Chicory)).